The primary structure comprises 725 residues: uncharacterized protein (725 aa).

A FtsK domain is found at 363–556; the sequence is GTYVEIPLYS…FVTTRPEDSC (194 aa). ATP is bound at residue 382-389; sequence GRTRGGKS.

Belongs to the FtsK/SpoIIIE/SftA family.

Functionally, probable DNA motor protein. May track DNA in a ATP-dependent manner by generating positive supercoils in front of it and negative supercoils behind it. This is an uncharacterized protein from Nostoc sp. (strain PCC 7120 / SAG 25.82 / UTEX 2576).